A 675-amino-acid polypeptide reads, in one-letter code: Acyl-coenzyme A oxidase 3, peroxisomal (675 aa).

The transit peptide at 1–34 (MSDNRALRRAHVLANHILQSNPPSSNPSLSRELC) directs the protein to the peroxisome. 442–457 (AVGGQGVKTENLVGQL) contributes to the FAD binding site.

Belongs to the acyl-CoA oxidase family. The cofactor is FAD. As to expression, most abundant in flowers and senescing rosette leaves. Lower expression in hypocotyls, stems, young rosette leaves, cotyledons, cauline leaves and root tip of young seedlings.

It localises to the peroxisome. It catalyses the reaction a 2,3-saturated acyl-CoA + O2 = a (2E)-enoyl-CoA + H2O2. It functions in the pathway lipid metabolism; peroxisomal fatty acid beta-oxidation. In terms of biological role, catalyzes the desaturation of medium-chain acyl-CoAs to 2-trans-enoyl-CoAs. Active on C8:0- to C14:0-CoA with a maximal activity on C12:0-CoA. The protein is Acyl-coenzyme A oxidase 3, peroxisomal (ACX3) of Arabidopsis thaliana (Mouse-ear cress).